Here is a 274-residue protein sequence, read N- to C-terminus: Diaminopimelate epimerase (274 aa).

Asn-11, Gln-44, and Asn-64 together coordinate substrate. Cys-73 acts as the Proton donor in catalysis. Substrate-binding positions include 74-75 (GN), Asn-157, Asn-190, and 208-209 (ER). Cys-217 serves as the catalytic Proton acceptor. 218–219 (GT) lines the substrate pocket.

It belongs to the diaminopimelate epimerase family. As to quaternary structure, homodimer.

The protein localises to the cytoplasm. It carries out the reaction (2S,6S)-2,6-diaminopimelate = meso-2,6-diaminopimelate. It participates in amino-acid biosynthesis; L-lysine biosynthesis via DAP pathway; DL-2,6-diaminopimelate from LL-2,6-diaminopimelate: step 1/1. Catalyzes the stereoinversion of LL-2,6-diaminopimelate (L,L-DAP) to meso-diaminopimelate (meso-DAP), a precursor of L-lysine and an essential component of the bacterial peptidoglycan. This is Diaminopimelate epimerase from Blochmanniella pennsylvanica (strain BPEN).